The sequence spans 237 residues: MGKRLISQNRGRGTPKYRSPSHKRKGEVKYRSYDEMEKVGKVLGTVIDVLHDPGRSAPVAKVRFANGEERLVLIPEGISVGEQIECGISAEIKPGNVLPLGEIPEGIPVYNIETIPGDGGKLVRAGGCYAHVVAHDIGKTIVKLPSGYAKVLNPACRATIGVVAGGGRKEKPFVKAGKKHHSLSAKAVAWPKVRGVAMNAVDHPYGGGRHQHLGKPSSVSRNTSPGRKVGHIASRRT.

Residues 1 to 11 (MGKRLISQNRG) show a composition bias toward polar residues. Disordered stretches follow at residues 1 to 26 (MGKR…KRKG) and 204 to 237 (PYGG…SRRT). Basic residues-rich tracts occupy residues 13–26 (GTPK…KRKG) and 228–237 (KVGHIASRRT).

Belongs to the universal ribosomal protein uL2 family. As to quaternary structure, part of the 50S ribosomal subunit. Forms a bridge to the 30S subunit in the 70S ribosome.

In terms of biological role, one of the primary rRNA binding proteins. Required for association of the 30S and 50S subunits to form the 70S ribosome, for tRNA binding and peptide bond formation. It has been suggested to have peptidyltransferase activity; this is somewhat controversial. Makes several contacts with the 16S rRNA in the 70S ribosome. The protein is Large ribosomal subunit protein uL2 of Methanococcus vannielii.